A 360-amino-acid chain; its full sequence is MEEIFDKLQAVADRYDELNELISDPEVIADSQRFMKLSKEEGSLRETVEKYNEYKEVTQTIKDDTEMLREESDPDLVEMTKEELNEAKERQAQLQDELEVLLIPKDPNDDKNIIMEIRGAAGGDEASLFAADLYNMYVRYAEKQGWNVEVVDRNETEVGGFKEIALIITGDQVYSKLKFENGAHRVQRIPATESAGRVHTSTATVGVMPEAEDVDVDLDPKDIRVDVYRSSGAGGQHINKTSSAVRMTHLPTGIVVAMQDERSQQQNRAKAMQILKARVYDYYQQQEQSEYDAQRKNAIGTGDRSERIRTYNYPQNRVTDHRIGLTLNKLDKIMAGDLEEIIESLIIADQAQKLEQLRNE.

Gln236 carries the post-translational modification N5-methylglutamine.

Belongs to the prokaryotic/mitochondrial release factor family. In terms of processing, methylated by PrmC. Methylation increases the termination efficiency of RF1.

The protein resides in the cytoplasm. Peptide chain release factor 1 directs the termination of translation in response to the peptide chain termination codons UAG and UAA. The chain is Peptide chain release factor 1 from Limosilactobacillus fermentum (strain NBRC 3956 / LMG 18251) (Lactobacillus fermentum).